Here is a 277-residue protein sequence, read N- to C-terminus: Sulfur carrier protein FdhD (277 aa).

Cys121 functions as the Cysteine persulfide intermediate in the catalytic mechanism. 260 to 265 (FCKPGR) contacts Mo-bis(molybdopterin guanine dinucleotide).

This sequence belongs to the FdhD family.

It localises to the cytoplasm. Its function is as follows. Required for formate dehydrogenase (FDH) activity. Acts as a sulfur carrier protein that transfers sulfur from IscS to the molybdenum cofactor prior to its insertion into FDH. This Escherichia coli O81 (strain ED1a) protein is Sulfur carrier protein FdhD.